A 556-amino-acid chain; its full sequence is 2-succinyl-5-enolpyruvyl-6-hydroxy-3-cyclohexene-1-carboxylate synthase (556 aa).

This sequence belongs to the TPP enzyme family. MenD subfamily. As to quaternary structure, homodimer. Requires Mg(2+) as cofactor. It depends on Mn(2+) as a cofactor. Thiamine diphosphate serves as cofactor.

The catalysed reaction is isochorismate + 2-oxoglutarate + H(+) = 5-enolpyruvoyl-6-hydroxy-2-succinyl-cyclohex-3-ene-1-carboxylate + CO2. It participates in quinol/quinone metabolism; 1,4-dihydroxy-2-naphthoate biosynthesis; 1,4-dihydroxy-2-naphthoate from chorismate: step 2/7. The protein operates within quinol/quinone metabolism; menaquinone biosynthesis. Catalyzes the thiamine diphosphate-dependent decarboxylation of 2-oxoglutarate and the subsequent addition of the resulting succinic semialdehyde-thiamine pyrophosphate anion to isochorismate to yield 2-succinyl-5-enolpyruvyl-6-hydroxy-3-cyclohexene-1-carboxylate (SEPHCHC). This is 2-succinyl-5-enolpyruvyl-6-hydroxy-3-cyclohexene-1-carboxylate synthase from Escherichia coli (strain 55989 / EAEC).